The primary structure comprises 195 residues: Phosphoheptose isomerase (195 aa).

Residues 37 to 195 enclose the SIS domain; it reads ISDSFKQHGK…IEFEMAKIRQ (159 aa). Position 52-54 (52-54) interacts with substrate; it reads NGG. His-61 and Glu-65 together coordinate Zn(2+). Residues Glu-65, 93–94, 119–121, Ser-124, and Gln-172 each bind substrate; these read ND and STS. Positions 172 and 180 each coordinate Zn(2+).

It belongs to the SIS family. GmhA subfamily. In terms of assembly, homotetramer. The cofactor is Zn(2+).

Its subcellular location is the cytoplasm. The enzyme catalyses 2 D-sedoheptulose 7-phosphate = D-glycero-alpha-D-manno-heptose 7-phosphate + D-glycero-beta-D-manno-heptose 7-phosphate. It functions in the pathway carbohydrate biosynthesis; D-glycero-D-manno-heptose 7-phosphate biosynthesis; D-glycero-alpha-D-manno-heptose 7-phosphate and D-glycero-beta-D-manno-heptose 7-phosphate from sedoheptulose 7-phosphate: step 1/1. Its function is as follows. Catalyzes the isomerization of sedoheptulose 7-phosphate in D-glycero-D-manno-heptose 7-phosphate. The sequence is that of Phosphoheptose isomerase from Histophilus somni (strain 2336) (Haemophilus somnus).